We begin with the raw amino-acid sequence, 163 residues long: Zinc finger A20 and AN1 domain-containing stress-associated protein 3 (163 aa).

The A20-type zinc finger occupies 7 to 41 (LQEPRLCANNCGFFGSTATQNLCSKCFRDLQHQEQ). Positions 13, 17, 29, and 32 each coordinate Zn(2+). The segment at 57–101 (VGAAASSSVSPPPPPPADSKEIVEAKSEKRAAAEPEEADGPPQDP) is disordered. Positions 74–89 (DSKEIVEAKSEKRAAA) are enriched in basic and acidic residues. Residues 98 to 144 (PQDPKRCLTCRRRVGITGFRCRCGFVFCGTHRYAEQHECSFDFKRMG) form an AN1-type zinc finger. Residues C104, C107, C118, C120, C125, H128, H134, and C136 each coordinate Zn(2+).

Its function is as follows. May be involved in environmental stress response. The sequence is that of Zinc finger A20 and AN1 domain-containing stress-associated protein 3 (SAP3) from Arabidopsis thaliana (Mouse-ear cress).